Consider the following 142-residue polypeptide: Probable inactive dual specificity protein phosphatase-like At4g18593 (142 aa).

This sequence belongs to the protein-tyrosine phosphatase family. Non-receptor class dual specificity subfamily.

The protein is Probable inactive dual specificity protein phosphatase-like At4g18593 of Arabidopsis thaliana (Mouse-ear cress).